A 576-amino-acid chain; its full sequence is MHPRYSPAPPPQQQQQMGGPPHQQQGGGGGGGGNMRGPSNAQQLPPQIPRSQNYSNGSSSSAAAAPLTSRSAFPGAPLTASAVALKGALPQRPPAMTSPAAAAAGAALAAGAPYRGAASWTPQGYAPAAAAAAAAVAQQAAYRYTAPLPQPAYAAYTPHTATTPATTTYGQRVPTAASPSNTNSSSSSNTGSQSGTLSTSLSNTTNTNTNMGPNGTVQNQNQQGGEQLSKTNLYIRGLQQGTTDKDLVNMCAQYGTIISTKAILDKTTNKCYGFVDFEQPAFAECAVKGLQGKGVQAQMAKQQEQDPTNLYIANLPPHFKETDLEAMLSKYGQVVSTRILRDQQMNSKGVGFARMESREKCEQIIQMFNGNTIPGAKDPLLVKFADGGPKKKNLFKTPDPNARAWRDVSAEGIPVAYDPTMQQNGVSVNVGTPIGVPYSRFSAPQVGGYPVAGSQWIPGYMMTTQVDDQTSYSPQYMQMAAAPQLGVTSYKPEAVNQVQPRGISMMVSGDTGVPYGTMMPQLATLQIGNSVSHRSPYYAPPPTIIPTMPMTDSEQASTAASPDEAYTQYPHQAAPK.

A compositionally biased stretch (pro residues) spans 1–12; it reads MHPRYSPAPPPQ. Positions 1-66 are disordered; sequence MHPRYSPAPP…GSSSSAAAAP (66 aa). Tyr5 is modified (phosphotyrosine). Residues 13–24 are compositionally biased toward low complexity; the sequence is QQQQMGGPPHQQ. The segment covering 25-35 has biased composition (gly residues); that stretch reads QGGGGGGGGNM. Polar residues predominate over residues 37 to 54; the sequence is GPSNAQQLPPQIPRSQNY. The span at 55–66 shows a compositional bias: low complexity; sequence SNGSSSSAAAAP. Phosphotyrosine is present on residues Tyr125 and Tyr142. Residues 164–225 are disordered; the sequence is PATTTYGQRV…TVQNQNQQGG (62 aa). Low complexity predominate over residues 178-225; it reads SPSNTNSSSSSNTGSQSGTLSTSLSNTTNTNTNMGPNGTVQNQNQQGG. 2 consecutive RRM domains span residues 231-302 and 308-387; these read TNLY…MAKQ and TNLY…FADG. Residues 538–576 form a disordered region; it reads YAPPPTIIPTMPMTDSEQASTAASPDEAYTQYPHQAAPK.

Has a role in the perception of gravity. The sequence is that of Protein alan shepard from Drosophila simulans (Fruit fly).